The following is a 992-amino-acid chain: Meckelin (992 aa).

An N-terminal signal peptide occupies residues 1–35 (MVMRTRPLAAMAVRSCFSALTGTVYLLLVLCEVSW). Residues 36 to 516 (AQIFSFPFQR…SVKYEMNQGD (481 aa)) lie on the Extracellular side of the membrane. The segment at 37–280 (QIFSFPFQRP…FHYVFEGAAG (244 aa)) is cysteine-rich. 12 disulfides stabilise this stretch: cysteine 49–cysteine 62, cysteine 65–cysteine 78, cysteine 80–cysteine 97, cysteine 100–cysteine 114, cysteine 117–cysteine 127, cysteine 129–cysteine 150, cysteine 153–cysteine 170, cysteine 173–cysteine 184, cysteine 186–cysteine 197, cysteine 237–cysteine 246, cysteine 253–cysteine 268, and cysteine 354–cysteine 375. N-linked (GlcNAc...) asparagine glycosylation is present at asparagine 242. Residues 517–545 (AFVQTDIALGVLGGLAVLSSLLKTAGWKR) form a helical membrane-spanning segment. The Cytoplasmic portion of the chain corresponds to 546-555 (RIGSPMIDLQ). The chain crosses the membrane as a helical span at residues 556 to 587 (TVMKFLLYYAGDLANVFFIITVGTGLYWLIFF). The Extracellular portion of the chain corresponds to 588–600 (KAQKSVSVLLPMP). The helical transmembrane segment at 601 to 628 (VQEERFVTYVGCAFAMKALQFLHKLISQ) threads the bilayer. At 629–667 (ITIDIFFIDWERPKGKVLKAVEGEGGVRSATVPVSIWRT) the chain is on the cytoplasmic side. Residues 668–676 (YFVANEWNE) constitute an intramembrane region (helical). Residues 668–698 (YFVANEWNEIQTVRKINPLFQVLTTLFFLEV) form a discontinuously helical membrane-spanning segment. The stretch at 677–685 (IQTVRKINP) is an intramembrane region. The helical intramembrane region spans 686–698 (LFQVLTTLFFLEV). The Extracellular segment spans residues 699 to 728 (VGFKNLALMDPSSSLSRSLSDYAAPYSRIL). An intramembrane region (helical) is located at residues 729-754 (RYAVATTIWLVIGIVQVVFFAAFYER). The discontinuously helical transmembrane segment at 729–768 (RYAVATTIWLVIGIVQVVFFAAFYERFIEDKIRQFVDLCS) threads the bilayer. The stretch at 755–759 (FIEDK) is an intramembrane region. The helical intramembrane region spans 760–768 (IRQFVDLCS). Residues 769–923 (MSNVSVFLLS…SIFYNDESHS (155 aa)) are Cytoplasmic-facing. An intramembrane region (helical) is located at residues 924 to 926 (FSS). The discontinuously helical transmembrane segment at 924-949 (FSSVLYYGNEATLLIFDLLFFCVVDL) threads the bilayer. Residues 927–933 (VLYYGNE) lie within the membrane without spanning it. Positions 934–949 (ATLLIFDLLFFCVVDL) form an intramembrane region, helical. Over 950–954 (ACQNF) the chain is Extracellular. A helical transmembrane segment spans residues 955–982 (VLASFLTYLQQEIFRFIRNTVGQKNLAT). The Cytoplasmic portion of the chain corresponds to 983 to 992 (KTLVDERFLI).

In terms of assembly, homodimer. Part of the tectonic-like complex (also named B9 complex). Interacts with DNAJB9, DNAJC10 and mutated SFTPC. Interacts with SYNE2 during the early establishment of cell polarity. Interacts (via C-terminus) with FLNA. Interacts with TMEM218. Interacts with WNT5A. Interacts with ROR2.

Its subcellular location is the cell membrane. The protein localises to the endoplasmic reticulum membrane. It localises to the cytoplasm. It is found in the cytoskeleton. The protein resides in the cilium basal body. Its function is as follows. Part of the tectonic-like complex which is required for tissue-specific ciliogenesis and may regulate ciliary membrane composition. Involved in centrosome migration to the apical cell surface during early ciliogenesis. Required for ciliary structure and function, including a role in regulating length and appropriate number through modulating centrosome duplication. Is a key regulator of stereociliary bundle orientation. Required for epithelial cell branching morphology. Essential for endoplasmic reticulum-associated degradation (ERAD) of surfactant protein C (sftpc). Involved in the negative regulation of canonical Wnt signaling, and activation of the non-canonical cascade stimulated by WNT5A. In non-canonical Wnt signaling, it may act as ROR2 coreceptor. The chain is Meckelin (Tmem67) from Rattus norvegicus (Rat).